The sequence spans 313 residues: GTP cyclohydrolase MptA (313 aa).

It belongs to the GTP cyclohydrolase IV family. In terms of assembly, homodimer. The cofactor is Fe(2+).

It carries out the reaction GTP + H2O = 7,8-dihydroneopterin 2',3'-cyclic phosphate + formate + diphosphate + H(+). It functions in the pathway cofactor biosynthesis; 5,6,7,8-tetrahydromethanopterin biosynthesis. With respect to regulation, inhibited by GTP concentrations greater than 0.3 mM and by 2-amino-5-formylamino-6-ribofuranosylamino-4(3H)-pyrimidinone 5'-phosphate (fapyGMP). Partial inhibition is observed when 2 mM GMP, dGTP, or 7-methyl-GTP was included along with 2 mM GTP. Functionally, converts GTP to 7,8-dihydro-D-neopterin 2',3'-cyclic phosphate, the first intermediate in the biosynthesis of coenzyme methanopterin. It is also able to utilize a variety of GTP analogs as substrates, including GDP, beta,gamma-methylene-GTP and GTP-[gamma-thio]. This chain is GTP cyclohydrolase MptA (mptA), found in Methanocaldococcus jannaschii (strain ATCC 43067 / DSM 2661 / JAL-1 / JCM 10045 / NBRC 100440) (Methanococcus jannaschii).